Here is a 511-residue protein sequence, read N- to C-terminus: MSATIARAEEQQNGSTVELKDDTVIVVLGASGDLAKKKTFPALFGLFRNKFLPKGIKIVGYARTQMDHNEYLKRVRSYIKTPTKEIEEQLNSFCELCTYISGQYDQDDSFKNLAKHLEEIEKNQKEQNRVFYMALPPSVFITVSEQLKRNCYPKNGVARIIVEKPFGKDLQSSRDLQKALEPNWKEEEIFRIDHYLGKEMVKNILIMRFGNEFFNATWNRHHIDNVQITFKEPFGTEGRGGYFDEFGIIRDVMQNHLLQVLTLLAMERPISFSAEDIRDEKVRVLRAMDPIQPKDVIIGQYGRSLDGSKPAYKEDDTVPQDSRCPTFCALVAHIKNERWDGVPFIMKAGKALNEQKTEIRIQFKDVTSGIFKDIPRNELVIRVQPNESVYIKMNSKLPGLSMQTVVTELDLTYRRRFSDLKIPEAYESLILDALKGDHSNFVRDDELDASWRMFTPLLHYLDDNKEIIPMEYPYGSRGPSVLDDFTASYGYKFSDAAGYQWPLTHTTPNRL.

NADP(+)-binding positions include 29–36 (GASGDLAK), R63, and K164. D-glucose 6-phosphate is bound by residues K164, 194–198 (HYLGK), E232, and D251. H256 acts as the Proton acceptor in catalysis. Residue K347 coordinates NADP(+). K350 is a D-glucose 6-phosphate binding site. K356, R360, and R382 together coordinate NADP(+). D-glucose 6-phosphate is bound at residue Q384. Residues 390-392 (YIK), 410-412 (DLT), and R477 each bind NADP(+).

It belongs to the glucose-6-phosphate dehydrogenase family.

It catalyses the reaction D-glucose 6-phosphate + NADP(+) = 6-phospho-D-glucono-1,5-lactone + NADPH + H(+). It participates in carbohydrate degradation; pentose phosphate pathway; D-ribulose 5-phosphate from D-glucose 6-phosphate (oxidative stage): step 1/3. Its function is as follows. Catalyzes the rate-limiting step of the oxidative pentose-phosphate pathway, which represents a route for the dissimilation of carbohydrates besides glycolysis. The main function of this enzyme is to provide reducing power (NADPH) and pentose phosphates for fatty acid and nucleic acid synthesis. This is Glucose-6-phosphate 1-dehydrogenase (gsdA) from Emericella nidulans (strain FGSC A4 / ATCC 38163 / CBS 112.46 / NRRL 194 / M139) (Aspergillus nidulans).